A 653-amino-acid polypeptide reads, in one-letter code: Protein SCARECROW (653 aa).

Disordered stretches follow at residues 1 to 69 (MAES…RRVS) and 193 to 265 (PSSS…AVQT). A compositionally biased stretch (low complexity) spans 17 to 31 (PLRTTSSGSSSSNNR). The segment covering 32-41 (GPPPPPPPPL) has biased composition (pro residues). Residues 51–63 (EMSSNPDYNNSSR) show a composition bias toward polar residues. The segment covering 209-230 (QISNNPSPPQQQQQHQQQQQQH) has biased composition (low complexity). The span at 246–265 (STDAPPQPETVTATVPAVQT) shows a compositional bias: polar residues. A GRAS domain is found at 281 to 650 (QKQDEEGLHL…LSLLTASAWT (370 aa)). The tract at residues 288-351 (LHLLTLLLQC…LLNSCLGIYA (64 aa)) is leucine repeat I (LRI). The short motif at 295 to 299 (LQCAE) is the LxCxE motif element. Residues 370 to 435 (FQVFNGISPL…GGPPHVRLTG (66 aa)) form a VHIID region. Positions 401–405 (VHIID) match the VHIID motif. Residues 445-477 (ATGKRLSDFADKLGLPFEFCPLAEKVGNLDTER) are leucine repeat II (LRII). A PFYRE region spans residues 486 to 573 (VAVHWLQHSL…QQLLSKEIRN (88 aa)). Residues 576 to 650 (AVGGPSRSGE…LSLLTASAWT (75 aa)) form an SAW region.

This sequence belongs to the GRAS family. As to quaternary structure, interacts with SHR, JKD and MGP. Interacts with SIEL. Interacts with RBR1 through its the LxCxE motif. Expressed in siliques, leaves and roots. Detected in the initial daughter cell before its asymmetric division and remains expressed only in the endodermal cell layer after the division. Expressed in the endodermis or starch sheath of the seedling hypocotyl, in the leaf bundle sheath cells and the root quiescent center.

The protein resides in the nucleus. Transcription factor required for quiescent center cells specification and maintenance of surrounding stem cells, and for the asymmetric cell division involved in radial pattern formation in roots. Essential for cell division but not differentiation of the ground tissue. Also required for normal shoot gravitropism. Regulates the radial organization of the shoot axial organs. Binds to the promoter of MGP, NUC, RLK and SCL3. Restricts SHR movment and sequesters it into the nucleus of the endodermis. This Arabidopsis thaliana (Mouse-ear cress) protein is Protein SCARECROW.